A 700-amino-acid chain; its full sequence is Interleukin-1 receptor accessory protein-like 1-B (700 aa).

The signal sequence occupies residues 1–18 (MRSRVPLQILLYAAVIRS). The Extracellular portion of the chain corresponds to 19–357 (LKVVSKRGSV…QLSRRELMYT (339 aa)). The Ig-like C2-type 1 domain occupies 32–134 (TDWSVDYLRY…YCMKVSMALT (103 aa)). Cys53 and Cys118 are disulfide-bonded. N-linked (GlcNAc...) asparagine glycans are attached at residues Asn63, Asn122, Asn138, Asn213, Asn264, and Asn331. 2 consecutive Ig-like C2-type domains span residues 143-232 (CYNS…TELT) and 242-350 (PKIL…IQLS). Cys164 and Cys216 are disulfide-bonded. Cys267 and Cys334 form a disulfide bridge. Residues 358-378 (VELAGGLGAILLMLIFLVSLY) traverse the membrane as a helical segment. At 379–700 (KCYRIELMLF…RETSISSVIW (322 aa)) the chain is on the cytoplasmic side. The TIR domain occupies 403–559 (KDYDAYVSYT…RFWKQLQYEM (157 aa)). Glu491 is an active-site residue. The segment at 564–700 (PEPKLSHEQV…RETSISSVIW (137 aa)) is required for synaptic vesicle accumulation during synaptogenesis.

Belongs to the interleukin-1 receptor family.

Its subcellular location is the cell membrane. It localises to the cytoplasm. The catalysed reaction is NAD(+) + H2O = ADP-D-ribose + nicotinamide + H(+). May regulate secretion and presynaptic differentiation through inhibition of the activity of N-type voltage-gated calcium channel. During presynaptic differentiation may regulate both synaptic vesicle accumulation in axon terminals and subsequent axon terminal remodeling. This Danio rerio (Zebrafish) protein is Interleukin-1 receptor accessory protein-like 1-B (il1rapl1b).